Here is a 57-residue protein sequence, read N- to C-terminus: Large ribosomal subunit protein uL30 (57 aa).

It belongs to the universal ribosomal protein uL30 family. As to quaternary structure, part of the 50S ribosomal subunit.

This is Large ribosomal subunit protein uL30 from Clostridium acetobutylicum (strain ATCC 824 / DSM 792 / JCM 1419 / IAM 19013 / LMG 5710 / NBRC 13948 / NRRL B-527 / VKM B-1787 / 2291 / W).